Consider the following 283-residue polypeptide: Bifunctional protein FolD (283 aa).

166–168 provides a ligand contact to NADP(+); that stretch reads GAS.

The protein belongs to the tetrahydrofolate dehydrogenase/cyclohydrolase family. In terms of assembly, homodimer.

The catalysed reaction is (6R)-5,10-methylene-5,6,7,8-tetrahydrofolate + NADP(+) = (6R)-5,10-methenyltetrahydrofolate + NADPH. The enzyme catalyses (6R)-5,10-methenyltetrahydrofolate + H2O = (6R)-10-formyltetrahydrofolate + H(+). Its pathway is one-carbon metabolism; tetrahydrofolate interconversion. Its function is as follows. Catalyzes the oxidation of 5,10-methylenetetrahydrofolate to 5,10-methenyltetrahydrofolate and then the hydrolysis of 5,10-methenyltetrahydrofolate to 10-formyltetrahydrofolate. This chain is Bifunctional protein FolD, found in Coxiella burnetii (strain CbuG_Q212) (Coxiella burnetii (strain Q212)).